A 146-amino-acid polypeptide reads, in one-letter code: 1,4-dihydroxy-2-naphthoyl-CoA hydrolase (146 aa).

Asp-15 is a catalytic residue.

Belongs to the 4-hydroxybenzoyl-CoA thioesterase family. DHNA-CoA hydrolase subfamily.

The catalysed reaction is 1,4-dihydroxy-2-naphthoyl-CoA + H2O = 1,4-dihydroxy-2-naphthoate + CoA + H(+). The protein operates within cofactor biosynthesis; phylloquinone biosynthesis. Its pathway is quinol/quinone metabolism; 1,4-dihydroxy-2-naphthoate biosynthesis; 1,4-dihydroxy-2-naphthoate from chorismate: step 7/7. Catalyzes the hydrolysis of 1,4-dihydroxy-2-naphthoyl-CoA (DHNA-CoA) to 1,4-dihydroxy-2-naphthoate (DHNA), a reaction involved in phylloquinone (vitamin K1) biosynthesis. This Picosynechococcus sp. (strain ATCC 27264 / PCC 7002 / PR-6) (Agmenellum quadruplicatum) protein is 1,4-dihydroxy-2-naphthoyl-CoA hydrolase.